The following is a 143-amino-acid chain: Pathogenesis-related protein P2 (143 aa).

Positions 1–23 (MERVNKLCVAFFVINMMMAVAAA) are cleaved as a signal peptide. A Barwin domain is found at 24-143 (QSATNVRATY…LNVNYEFVNC (120 aa)). Cystine bridges form between Cys52-Cys84, Cys73-Cys107, and Cys87-Cys143.

It localises to the secreted. The protein localises to the cell wall. This chain is Pathogenesis-related protein P2, found in Solanum lycopersicum (Tomato).